Here is a 474-residue protein sequence, read N- to C-terminus: ATP-dependent rRNA helicase RRP3 (474 aa).

The segment covering 1 to 10 (MPSMKRRKLS) has biased composition (basic residues). A disordered region spans residues 1 to 43 (MPSMKRRKLSHTPPQGEAEDGFSDSETSQASLQETPGNDEKIE). Residues 24–36 (DSETSQASLQETP) show a composition bias toward polar residues. Positions 48-76 (KSFKDLGIIDSLCEACDSLGYKAPTQIQA) match the Q motif motif. One can recognise a Helicase ATP-binding domain in the interval 79-250 (IPLALQGRDL…RASLSNPLRV (172 aa)). ATP is bound at residue 92–99 (AETGSGKT). Positions 198 to 201 (DEAD) match the DEAD box motif. One can recognise a Helicase C-terminal domain in the interval 278–422 (YLIYLLNEFP…EYKVEKEEVM (145 aa)). The segment at 442-474 (LHENRGKKGATLRNRRIGKGAKRSRDEMDREEG) is disordered. Positions 448–463 (KKGATLRNRRIGKGAK) are enriched in basic residues. Residues 464–474 (RSRDEMDREEG) are compositionally biased toward basic and acidic residues.

This sequence belongs to the DEAD box helicase family. DDX47/RRP3 subfamily. As to quaternary structure, interacts with the SSU processome.

It localises to the nucleus. It catalyses the reaction ATP + H2O = ADP + phosphate + H(+). In terms of biological role, ATP-dependent rRNA helicase required for pre-ribosomal RNA processing. Involved in the maturation of the 35S-pre-rRNA and to its cleavage to mature 18S rRNA. This Coccidioides immitis (strain RS) (Valley fever fungus) protein is ATP-dependent rRNA helicase RRP3.